Reading from the N-terminus, the 446-residue chain is UPF0597 protein DvMF_1488 (446 aa).

This sequence belongs to the UPF0597 family.

This chain is UPF0597 protein DvMF_1488, found in Nitratidesulfovibrio vulgaris (strain DSM 19637 / Miyazaki F) (Desulfovibrio vulgaris).